The sequence spans 209 residues: MNKKKRFEILSLFYKKNSNPKIELVFSSDFELLLSVILSAKSTDVMVNKITGTLFQIANTPQSILKLGFNKLRHYIKSIGLYNTKSLNIINSAYLIKTKYNNKVPSNRTELESLPGVGRKTANIILNVLFNKNTIAVDTHVFRVANRTGFAKGKNVIEVEKKMIKIVPSIFKKYVHFWFVLHGRYVCTARQLKCKTCFIEKLCEFDKKK.

The HhH domain maps to 108 to 127; it reads RTELESLPGVGRKTANIILN. [4Fe-4S] cluster contacts are provided by C187, C194, C197, and C203.

This sequence belongs to the Nth/MutY family. The cofactor is [4Fe-4S] cluster.

The catalysed reaction is 2'-deoxyribonucleotide-(2'-deoxyribose 5'-phosphate)-2'-deoxyribonucleotide-DNA = a 3'-end 2'-deoxyribonucleotide-(2,3-dehydro-2,3-deoxyribose 5'-phosphate)-DNA + a 5'-end 5'-phospho-2'-deoxyribonucleoside-DNA + H(+). Functionally, DNA repair enzyme that has both DNA N-glycosylase activity and AP-lyase activity. The DNA N-glycosylase activity releases various damaged pyrimidines from DNA by cleaving the N-glycosidic bond, leaving an AP (apurinic/apyrimidinic) site. The AP-lyase activity cleaves the phosphodiester bond 3' to the AP site by a beta-elimination, leaving a 3'-terminal unsaturated sugar and a product with a terminal 5'-phosphate. The sequence is that of Endonuclease III from Buchnera aphidicola subsp. Schizaphis graminum (strain Sg).